A 274-amino-acid chain; its full sequence is Centromere protein K (274 aa).

The tract at residues 1 to 21 is disordered; that stretch reads MSGYQHELPPNISKTSPAPEE. The stretch at 96 to 159 forms a coiled coil; that stretch reads KEELEKIAQE…NQLTAFSEKR (64 aa).

Belongs to the CENP-K/MCM22 family.

It localises to the nucleus. It is found in the chromosome. The protein localises to the centromere. Its subcellular location is the kinetochore. Functionally, probable component of a centromeric complex involved in assembly of kinetochore proteins, mitotic progression and chromosome segregation. The protein is Centromere protein K (cenpk) of Xenopus laevis (African clawed frog).